A 1207-amino-acid chain; its full sequence is DNA-directed RNA polymerase subunit beta' (1207 aa).

Zn(2+)-binding residues include Cys60, Cys62, Cys75, and Cys78. Residues Asp449, Asp451, and Asp453 each contribute to the Mg(2+) site. 4 residues coordinate Zn(2+): Cys822, Cys896, Cys903, and Cys906.

Belongs to the RNA polymerase beta' chain family. As to quaternary structure, the RNAP catalytic core consists of 2 alpha, 1 beta, 1 beta' and 1 omega subunit. When a sigma factor is associated with the core the holoenzyme is formed, which can initiate transcription. Mg(2+) serves as cofactor. The cofactor is Zn(2+).

It catalyses the reaction RNA(n) + a ribonucleoside 5'-triphosphate = RNA(n+1) + diphosphate. Its function is as follows. DNA-dependent RNA polymerase catalyzes the transcription of DNA into RNA using the four ribonucleoside triphosphates as substrates. The sequence is that of DNA-directed RNA polymerase subunit beta' from Staphylococcus epidermidis (strain ATCC 35984 / DSM 28319 / BCRC 17069 / CCUG 31568 / BM 3577 / RP62A).